The primary structure comprises 205 residues: LexA repressor (205 aa).

The segment at residues 28–48 is a DNA-binding region (H-T-H motif); that stretch reads IRDIMKHFNFKSPRAAHKHLI. Residues Ser125 and Lys163 each act as for autocatalytic cleavage activity in the active site.

The protein belongs to the peptidase S24 family. As to quaternary structure, homodimer.

The enzyme catalyses Hydrolysis of Ala-|-Gly bond in repressor LexA.. In terms of biological role, represses a number of genes involved in the response to DNA damage (SOS response), including recA and lexA. In the presence of single-stranded DNA, RecA interacts with LexA causing an autocatalytic cleavage which disrupts the DNA-binding part of LexA, leading to derepression of the SOS regulon and eventually DNA repair. This Petrotoga mobilis (strain DSM 10674 / SJ95) protein is LexA repressor.